The sequence spans 155 residues: SsrA-binding protein (155 aa).

Residues 127 to 149 show a composition bias toward basic and acidic residues; the sequence is KKDYDKRNDMRKKEAKREMERTF. Residues 127–155 are disordered; sequence KKDYDKRNDMRKKEAKREMERTFKSKNQY.

The protein belongs to the SmpB family.

It localises to the cytoplasm. Required for rescue of stalled ribosomes mediated by trans-translation. Binds to transfer-messenger RNA (tmRNA), required for stable association of tmRNA with ribosomes. tmRNA and SmpB together mimic tRNA shape, replacing the anticodon stem-loop with SmpB. tmRNA is encoded by the ssrA gene; the 2 termini fold to resemble tRNA(Ala) and it encodes a 'tag peptide', a short internal open reading frame. During trans-translation Ala-aminoacylated tmRNA acts like a tRNA, entering the A-site of stalled ribosomes, displacing the stalled mRNA. The ribosome then switches to translate the ORF on the tmRNA; the nascent peptide is terminated with the 'tag peptide' encoded by the tmRNA and targeted for degradation. The ribosome is freed to recommence translation, which seems to be the essential function of trans-translation. In Lysinibacillus sphaericus (strain C3-41), this protein is SsrA-binding protein.